Reading from the N-terminus, the 207-residue chain is dTTP/UTP pyrophosphatase (207 aa).

D79 functions as the Proton acceptor in the catalytic mechanism.

Belongs to the Maf family. YhdE subfamily. It depends on a divalent metal cation as a cofactor.

It localises to the cytoplasm. The enzyme catalyses dTTP + H2O = dTMP + diphosphate + H(+). It catalyses the reaction UTP + H2O = UMP + diphosphate + H(+). Functionally, nucleoside triphosphate pyrophosphatase that hydrolyzes dTTP and UTP. May have a dual role in cell division arrest and in preventing the incorporation of modified nucleotides into cellular nucleic acids. The sequence is that of dTTP/UTP pyrophosphatase from Rhodopseudomonas palustris (strain BisB18).